A 130-amino-acid chain; its full sequence is Large ribosomal subunit protein bL19 (130 aa).

The protein belongs to the bacterial ribosomal protein bL19 family.

This protein is located at the 30S-50S ribosomal subunit interface and may play a role in the structure and function of the aminoacyl-tRNA binding site. This is Large ribosomal subunit protein bL19 from Gluconobacter oxydans (strain 621H) (Gluconobacter suboxydans).